A 172-amino-acid polypeptide reads, in one-letter code: Cytochrome b6-f complex iron-sulfur subunit (172 aa).

The helical transmembrane segment at 19 to 39 threads the bilayer; sequence LNALLSGSVGVVVVGALYPVV. The region spanning 61–161 is the Rieske domain; the sequence is GKPISVSELL…ATVDGDNVRF (101 aa). [2Fe-2S] cluster contacts are provided by C107, H109, C125, and H128. An intrachain disulfide couples C112 to C127.

Belongs to the Rieske iron-sulfur protein family. The 4 large subunits of the cytochrome b6-f complex are cytochrome b6, subunit IV (17 kDa polypeptide, PetD), cytochrome f and the Rieske protein, while the 4 small subunits are PetG, PetL, PetM and PetN. The complex functions as a dimer. It depends on [2Fe-2S] cluster as a cofactor.

The protein resides in the cellular thylakoid membrane. The enzyme catalyses 2 oxidized [plastocyanin] + a plastoquinol + 2 H(+)(in) = 2 reduced [plastocyanin] + a plastoquinone + 4 H(+)(out). Functionally, component of the cytochrome b6-f complex, which mediates electron transfer between photosystem II (PSII) and photosystem I (PSI), cyclic electron flow around PSI, and state transitions. In Synechococcus sp. (strain JA-2-3B'a(2-13)) (Cyanobacteria bacterium Yellowstone B-Prime), this protein is Cytochrome b6-f complex iron-sulfur subunit.